Reading from the N-terminus, the 189-residue chain is GMP synthase [glutamine-hydrolyzing] subunit A (189 aa).

In terms of domain architecture, Glutamine amidotransferase type-1 spans 1-189 (MIVILNNGGQ…CKKCGFGFEE (189 aa)). The active-site Nucleophile is C76. Catalysis depends on residues H163 and E165.

As to quaternary structure, heterodimer composed of a glutamine amidotransferase subunit (A) and a GMP-binding subunit (B).

It carries out the reaction XMP + L-glutamine + ATP + H2O = GMP + L-glutamate + AMP + diphosphate + 2 H(+). Its pathway is purine metabolism; GMP biosynthesis; GMP from XMP (L-Gln route): step 1/1. Its function is as follows. Catalyzes the synthesis of GMP from XMP. The chain is GMP synthase [glutamine-hydrolyzing] subunit A from Methanococcus maripaludis (strain DSM 14266 / JCM 13030 / NBRC 101832 / S2 / LL).